Reading from the N-terminus, the 333-residue chain is Ferrochelatase (333 aa).

Fe cation-binding residues include H202 and E284.

Belongs to the ferrochelatase family.

It is found in the cytoplasm. The enzyme catalyses heme b + 2 H(+) = protoporphyrin IX + Fe(2+). It functions in the pathway porphyrin-containing compound metabolism; protoheme biosynthesis; protoheme from protoporphyrin-IX: step 1/1. Its function is as follows. Catalyzes the ferrous insertion into protoporphyrin IX. This chain is Ferrochelatase, found in Francisella tularensis subsp. tularensis (strain FSC 198).